The sequence spans 462 residues: BPI fold-containing family B member 2 (462 aa).

An N-terminal signal peptide occupies residues Met1–Thr22. Thr55 bears the Phosphothreonine mark. Ser63 carries the phosphoserine modification. Residue Asn99 is glycosylated (N-linked (GlcNAc...) asparagine). A disulfide bond links Cys140 and Cys177. Asn297 and Asn336 each carry an N-linked (GlcNAc...) asparagine glycan.

This sequence belongs to the BPI/LBP/Plunc superfamily. BPI/LBP family.

The protein localises to the secreted. This Mus musculus (Mouse) protein is BPI fold-containing family B member 2 (Bpifb2).